Reading from the N-terminus, the 160-residue chain is Crossover junction endodeoxyribonuclease RuvC (160 aa).

Active-site residues include Asp7, Glu70, and Asp142. Residues Asp7, Glu70, and Asp142 each contribute to the Mg(2+) site.

This sequence belongs to the RuvC family. Homodimer which binds Holliday junction (HJ) DNA. The HJ becomes 2-fold symmetrical on binding to RuvC with unstacked arms; it has a different conformation from HJ DNA in complex with RuvA. In the full resolvosome a probable DNA-RuvA(4)-RuvB(12)-RuvC(2) complex forms which resolves the HJ. Mg(2+) is required as a cofactor.

It is found in the cytoplasm. The enzyme catalyses Endonucleolytic cleavage at a junction such as a reciprocal single-stranded crossover between two homologous DNA duplexes (Holliday junction).. In terms of biological role, the RuvA-RuvB-RuvC complex processes Holliday junction (HJ) DNA during genetic recombination and DNA repair. Endonuclease that resolves HJ intermediates. Cleaves cruciform DNA by making single-stranded nicks across the HJ at symmetrical positions within the homologous arms, yielding a 5'-phosphate and a 3'-hydroxyl group; requires a central core of homology in the junction. The consensus cleavage sequence is 5'-(A/T)TT(C/G)-3'. Cleavage occurs on the 3'-side of the TT dinucleotide at the point of strand exchange. HJ branch migration catalyzed by RuvA-RuvB allows RuvC to scan DNA until it finds its consensus sequence, where it cleaves and resolves the cruciform DNA. The polypeptide is Crossover junction endodeoxyribonuclease RuvC (Ehrlichia ruminantium (strain Welgevonden)).